The primary structure comprises 143 residues: uncharacterized protein (143 aa).

The next 2 membrane-spanning stretches (helical) occupy residues 20 to 39 (FKYC…WITV) and 113 to 135 (YFSL…ITGL).

It localises to the membrane. This is an uncharacterized protein from Saccharomyces cerevisiae (strain ATCC 204508 / S288c) (Baker's yeast).